The following is a 209-amino-acid chain: Cytidylate kinase (209 aa).

9–17 (GPAAAGKGT) lines the ATP pocket.

It belongs to the cytidylate kinase family. Type 1 subfamily.

It is found in the cytoplasm. It catalyses the reaction CMP + ATP = CDP + ADP. It carries out the reaction dCMP + ATP = dCDP + ADP. This Granulibacter bethesdensis (strain ATCC BAA-1260 / CGDNIH1) protein is Cytidylate kinase.